The chain runs to 412 residues: Adipocyte plasma membrane-associated protein (412 aa).

The tract at residues 1–32 (MTEADGLRQRRPLRPQVVTDDNRTPEAKGGSS) is disordered. Topologically, residues 1–39 (MTEADGLRQRRPLRPQVVTDDNRTPEAKGGSSFSGRVFR) are cytoplasmic. Thr-19 is subject to Phosphothreonine. A helical transmembrane segment spans residues 40–60 (ATFLMLAAFLTIPLLGALVLL). Over 61–412 (DSPIDPEPLS…RAPYLCRLRL (352 aa)) the chain is Extracellular. N-linked (GlcNAc...) asparagine glycosylation is present at Asn-159.

The protein belongs to the strictosidine synthase family.

It is found in the membrane. Exhibits strong arylesterase activity with beta-naphthyl acetate and phenyl acetate. May play a role in adipocyte differentiation. This Bos taurus (Bovine) protein is Adipocyte plasma membrane-associated protein (APMAP).